We begin with the raw amino-acid sequence, 35 residues long: Cytochrome c-550 (35 aa).

Heme c-binding residues include cysteine 17, cysteine 20, and histidine 21.

In terms of processing, binds 1 heme c group covalently per subunit.

Its function is as follows. Monoheme cytochrome which functions as an electron carrier in the reduction of nitrite by membrane vesicles. This Virgibacillus halodenitrificans (Bacillus halodenitrificans) protein is Cytochrome c-550.